We begin with the raw amino-acid sequence, 377 residues long: Mitogen-activated protein kinase HOG1 (377 aa).

The region spanning 23–305 (YTELNPVGMG…AVEGLTHPYM (283 aa)) is the Protein kinase domain. Residues 29–37 (VGMGAFGLV) and Lys-52 contribute to the ATP site. The active-site Proton acceptor is Asp-144. Thr-174 is modified (phosphothreonine). Residues 174-176 (TGY) carry the TXY motif. Tyr-176 bears the Phosphotyrosine mark. Residues 354–377 (NETEGSEQPDSQVEQNNLDSANGA) form a disordered region. The span at 359–377 (SEQPDSQVEQNNLDSANGA) shows a compositional bias: polar residues.

The protein belongs to the protein kinase superfamily. Ser/Thr protein kinase family. MAP kinase subfamily. HOG1 sub-subfamily. It depends on Mg(2+) as a cofactor. In terms of processing, dually phosphorylated on Thr-174 and Tyr-176, which activates the enzyme. Phosphorylated in response to oxidative and salt stress.

It localises to the cytoplasm. Its subcellular location is the nucleus. It carries out the reaction L-seryl-[protein] + ATP = O-phospho-L-seryl-[protein] + ADP + H(+). It catalyses the reaction L-threonyl-[protein] + ATP = O-phospho-L-threonyl-[protein] + ADP + H(+). Activated by tyrosine and threonine phosphorylation. Functionally, proline-directed serine/threonine-protein kinase involved in a signal transduction pathway that is activated by changes in the osmolarity of the extracellular environment. Controls osmotic regulation of transcription of target genes. Regulates stress-induced production and accumulation of glycerol and D-arabitol. HOG1 is also involved in virulence, morphogenesis and oxidative stress response especially through its role in chlamydospore formation, an oxygen-dependent morphogenetic program. This is Mitogen-activated protein kinase HOG1 (HOG1) from Candida albicans (strain SC5314 / ATCC MYA-2876) (Yeast).